The chain runs to 891 residues: MLPKNYDPNEIEPKWQKYWLEEKIYKYRLDENKPSYAIDTPPPFTSGTLHLGHVLSHTWIDIIARYKRMRGYNVLFPQGFDNHGLPTELKVEKEFGITKDQPEEFLKKCVEWTWQAIEAMRKQFIRIGYSADWDLEYHTMDDWYKAAVQRSLLEFYKKGLIYREEHPVYWCPKCRTSLAKAEVGYVEEEGYLYYIKLPLADGSGYIPIATTRPELMPACVAVFVHPDDERYKHLVGKKVKLPIFEREVPILADEDVDPNFGTGAVYNCTYGDEQDIVWQKRYNLPVIIVINEDGTMNENAGPYAGLKIEEARKKIAEDLEKMGLLYKKEKIKHRVLRHTERSSCMAPIELLPKKQWFIKVKDLIDEIIKVAKEINWYPEDMFLRLKDWAESMDWDWVISRQRVFGTPFPFWVCKNGHIIPAREEDLPVDPRFDKPPVDKCPVCGAEIEPVTDVLDCWVDSSITPLIITKWHEAIKGDEEAKKWFEHNFPTALRPQGTDIIRTWAFYTILRTYVLTGKKPWKDIVINGMVAGPDGRKMSKSYGNVVSPEEVIPKYGADALRLWTALAPPGEDHPFKWETVDYNYRFLQKVWNIYRFAERHIKDFDYEKYRDVELEPLDKWILSRLHRIIKFATEELERYRFNLITRELITFIWHEVADDYIEMIKYRLYGEDEESKLKAKVALYELLYNVMLLLAPFVPHITEEIYHAIFKEKIGEKSVHLLSWPEYREDRIDEEAEKIGELARKIVSEMRKYKNSHGLPLNAKLKHVAIYALDSYERLKLIERDIAGTMNIERLEIVKGEPHLEERIVEVKPNYKNIGPKYGKLVPRIVQYLRENAESIVREIKEKGKAEFEVEGKKVELTKEDITVRKEVFSEGEKVETSVVDDVVIVFF.

The short motif at 43–53 (PFTSGTLHLGH) is the 'HIGH' region element. The 'KMSKS' region motif lies at 536–540 (KMSKS). Lys-539 lines the ATP pocket.

This sequence belongs to the class-I aminoacyl-tRNA synthetase family. ValS type 2 subfamily.

It localises to the cytoplasm. The enzyme catalyses tRNA(Val) + L-valine + ATP = L-valyl-tRNA(Val) + AMP + diphosphate. Its function is as follows. Catalyzes the attachment of valine to tRNA(Val). As ValRS can inadvertently accommodate and process structurally similar amino acids such as threonine, to avoid such errors, it has a 'posttransfer' editing activity that hydrolyzes mischarged Thr-tRNA(Val) in a tRNA-dependent manner. This Pyrococcus horikoshii (strain ATCC 700860 / DSM 12428 / JCM 9974 / NBRC 100139 / OT-3) protein is Valine--tRNA ligase.